The sequence spans 281 residues: Ribose-phosphate pyrophosphokinase (281 aa).

ATP is bound by residues 33 to 35 and 90 to 91; these read DGE and RQ. 2 residues coordinate Mg(2+): H123 and D161. K185 is a catalytic residue. R187 and D211 together coordinate D-ribose 5-phosphate.

The protein belongs to the ribose-phosphate pyrophosphokinase family. Class III (archaeal) subfamily. The cofactor is Mg(2+).

It is found in the cytoplasm. It catalyses the reaction D-ribose 5-phosphate + ATP = 5-phospho-alpha-D-ribose 1-diphosphate + AMP + H(+). The protein operates within metabolic intermediate biosynthesis; 5-phospho-alpha-D-ribose 1-diphosphate biosynthesis; 5-phospho-alpha-D-ribose 1-diphosphate from D-ribose 5-phosphate (route I): step 1/1. In terms of biological role, involved in the biosynthesis of the central metabolite phospho-alpha-D-ribosyl-1-pyrophosphate (PRPP) via the transfer of pyrophosphoryl group from ATP to 1-hydroxyl of ribose-5-phosphate (Rib-5-P). This is Ribose-phosphate pyrophosphokinase from Halobacterium salinarum (strain ATCC 29341 / DSM 671 / R1).